The chain runs to 608 residues: Chaperone protein HtpG (608 aa).

The tract at residues 1-332 (MQFQTEVNQL…VEDLPLNVSR (332 aa)) is a; substrate-binding. The segment at 333-536 (EILQENQILK…KNKPDFAMQQ (204 aa)) is b. A c region spans residues 537-608 (LLKQMGQEQN…LTKIINKAFS (72 aa)).

Belongs to the heat shock protein 90 family. Homodimer.

The protein resides in the cytoplasm. Functionally, molecular chaperone. Has ATPase activity. This chain is Chaperone protein HtpG, found in Campylobacter jejuni subsp. jejuni serotype O:23/36 (strain 81-176).